The following is a 1254-amino-acid chain: NPC intracellular cholesterol transporter 1 homolog 1b (1254 aa).

An N-terminal signal peptide occupies residues 1 to 16 (MKVIFATIWLIAGAWS). At 17-272 (QSAEQLGCIW…WKIAGLYGVT (256 aa)) the chain is on the extracellular side. 8 cysteine pairs are disulfide-bonded: Cys24–Cys81, Cys62–Cys116, Cys82–Cys120, Cys104–Cys241, Cys107–Cys161, Cys178–Cys186, Cys231–Cys246, and Cys243–Cys250. 2 N-linked (GlcNAc...) asparagine glycosylation sites follow: Asn123 and Asn132. Residues 273–293 (FILALIIACALSFFIFWGAFG) traverse the membrane as a helical segment. At 294–325 (KTSAPSVCMPTLFGEFFYHGFRIWGTFCAKHP) the chain is on the cytoplasmic side. Residues 326 to 346 (VIVLALCSWAIAGLSFGIRYM) form a helical membrane-spanning segment. Residues 347–593 (TITTDPVELW…AIVELSEGEV (247 aa)) lie on the Extracellular side of the membrane. N-linked (GlcNAc...) asparagine glycosylation occurs at Asn389. Residues Cys438 and Cys454 are joined by a disulfide bond. N-linked (GlcNAc...) asparagine glycosylation occurs at Asn479. Cys491 and Cys500 are joined by a disulfide. The SSD domain occupies 592–757 (EVSTVVISYV…ITAFVALMAI (166 aa)). The helical transmembrane segment at 594–614 (STVVISYVVMFVYVAIALGHI) threads the bilayer. Residues 615–625 (RSCRGFLRESR) are Cytoplasmic-facing. The chain crosses the membrane as a helical span at residues 626–646 (IMLAIGGIVIVLASVVCSLGF). The Extracellular segment spans residues 647–657 (WGYLDVTTTML). Residues 658–678 (AIEVIPFLVLAVGVDNIFIMV) traverse the membrane as a helical segment. Topologically, residues 679-736 (HTYQRLDHSKFKTTHEAIGEAIGQVGPSILQTAGSEMACFAIGCISDMPAVKTFAMYA) are cytoplasmic. Residues 737 to 757 (AIAILLDFLLQITAFVALMAI) form a helical membrane-spanning segment. Topologically, residues 758-815 (DEKRYLDGRLDMLCCVKSGGKKINDEDGDGVDRPKEVGLLETLFKNFYSPFLLSKPVK) are extracellular. A helical transmembrane segment spans residues 816 to 836 (VSVLLIFTVITCLSLMVTPSI). The Cytoplasmic segment spans residues 837–857 (EKGLDQEMSMPKNSHVVKYFR). A helical membrane pass occupies residues 858-878 (YMVDLLAMGAPVYWVLKPGLN). The Extracellular segment spans residues 879 to 1079 (YSEPLQQNLI…EQYLTIWGDA (201 aa)). A disulfide bridge links Cys889 with Cys894. 2 N-linked (GlcNAc...) asparagine glycosylation sites follow: Asn896 and Asn939. 3 disulfides stabilise this stretch: Cys935/Cys990, Cys936/Cys958, and Cys946/Cys955. The chain crosses the membrane as a helical span at residues 1080 to 1100 (MFSLGMSLVAIFLVTLLITGL). Residues 1101–1105 (DITST) are Cytoplasmic-facing. Residues 1106 to 1126 (FIVLFMVICILINMLGMMWAW) form a helical membrane-spanning segment. The Extracellular portion of the chain corresponds to 1127–1132 (SINLNA). The chain crosses the membrane as a helical span at residues 1133 to 1153 (ISLVNLVVCVGIGVEFVAHIV). Topologically, residues 1154-1174 (RSFKRAEGTAQERARHSLNVT) are cytoplasmic. Residues 1175–1195 (GSSVLSGITLTKFAGIVVLGF) form a helical membrane-spanning segment. The Extracellular portion of the chain corresponds to 1196–1207 (SNSQIFQVFYFR). The chain crosses the membrane as a helical span at residues 1208 to 1228 (MYLGIVLIGAAHGLILLPVLL). The Cytoplasmic segment spans residues 1229 to 1254 (SLLGPPQKLARSSGAEPTASITITTN).

This sequence belongs to the patched family. As to expression, expressed in the midgut.

The protein localises to the cell membrane. The enzyme catalyses cholesterol(in) = cholesterol(out). Its function is as follows. Important for cholesterol absorption at the midgut epithelium. Acts only in the early steps of sterol absorption, prior to Npc1a-dependent intracellular sterol trafficking. The sequence is that of NPC intracellular cholesterol transporter 1 homolog 1b from Drosophila melanogaster (Fruit fly).